Here is a 287-residue protein sequence, read N- to C-terminus: AA14 family lytic polysaccharide monooxygenase A (287 aa).

The signal sequence occupies residues 1–18 (MLRILTLSILATSKLASA). N-linked (GlcNAc...) asparagine glycosylation is found at Asn-33, Asn-83, and Asn-137. 3 disulfide bridges follow: Cys-188–Cys-193, Cys-195–Cys-216, and Cys-236–Cys-243. Asn-238 is a glycosylation site (N-linked (GlcNAc...) asparagine).

This sequence belongs to the polysaccharide monooxygenase AA14 family. Cu(2+) serves as cofactor.

The protein localises to the secreted. Lytic polysaccharide monooxygenase (LPMO) that has a broad substrate specificity with strong oxidative activity on pure amorphous cellulose and xyloglucan and plays as a bifunctional enzyme to decompose some specific network structures formed between cellulose and hemicellulose in the plant cell walls. Catalysis by LPMOs requires the reduction of the active-site copper from Cu(II) to Cu(I) by a reducing agent and H(2)O(2) or O(2) as a cosubstrate. Simultaneously oxidizes cellulose, xylan and xyloglucan in natural hemi/cellulosic substrate such as fibrillated eucalyptus pulp, and releases native and oxidized cello-oligosaccharides, xylo-oligosaccharides and xyloglucan oligosaccharides from this substrate. The cellulolytic/hemicellulolytic activity becomes weaker as the contents of xylan increase in the alkaline-extracted hemi/cellulosic substrates. The sequence is that of AA14 family lytic polysaccharide monooxygenase A from Talaromyces rugulosus (Penicillium rugulosum).